Consider the following 543-residue polypeptide: MTSAATVTASFNDTFSVSDNVAVIVPETDTQVTYRDLSHMVGHFQTMFTNPNSPLYGAVFRQDTVAISMRNGLEFIVAFLGATMDAKIGAPLNPNYKEKEFNFYLNDLKSKAICVPKGTTKLQSSEILKSASTFGCFIVELAFDATRFRVEYDIYSPEDNYKRVIYRSLNNAKFVNTNPVKFPGFARSSDVALILHTSGTTSTPKTVPLLHLNIVRSTLNIANTYKLTPLDRSYVVMPLFHVHGLIGVLLSTFRTQGSVVVPDGFHPKLFWDQFVKYNCNWFSCVPTISMIMLNMPKPNPFPHIRFIRSCSSALAPATFHKLEKEFNAPVLEAYAMTEASHQMTSNNLPPGKRKPGTVGQPQGVTVVILDDNDNVLPPGKVGEVSIRGENVTLGYANNPKANKENFTKRENYFRTGDQGYFDPEGFLVLTGRIKELINRGGEKISPIELDGIMLSHPKIDEAVAFGVPDDMYGQVVQAAIVLKKGEKMTYEELVNFLKKHLASFKIPTKVYFVDKLPKTATGKIQRRVIAETFAKSSRNKSKL.

196–207 (HTSGTTSTPKTV) contacts ATP. Positions 410–458 (ENYFRTGDQGYFDPEGFLVLTGRIKELINRGGEKISPIELDGIMLSHPK) match the FACS motif. A C-terminal peroxisome targeting signal (PTS1) motif is present at residues 541–543 (SKL).

The protein belongs to the ATP-dependent AMP-binding enzyme family. Interacts with PEX5.

It is found in the peroxisome matrix. The protein resides in the peroxisome membrane. The catalysed reaction is oxalate + ATP + CoA = oxalyl-CoA + AMP + diphosphate. Catalyzes the first step in a degradation pathway of oxalate to CO(2) to protect the cell against the harmful effects of oxalate derived from endogenous processes or an environmental sources. The sequence is that of Oxalate--CoA ligase from Saccharomyces cerevisiae (strain ATCC 204508 / S288c) (Baker's yeast).